A 625-amino-acid polypeptide reads, in one-letter code: tRNA uridine 5-carboxymethylaminomethyl modification enzyme MnmG (625 aa).

FAD is bound by residues 16-21 (GGGHAG), Ile128, and Ser183. Residue 275–289 (GPRYCPSIEDKVVRF) coordinates NAD(+). An FAD-binding site is contributed by Gln372.

It belongs to the MnmG family. Homodimer. Heterotetramer of two MnmE and two MnmG subunits. Requires FAD as cofactor.

It is found in the cytoplasm. Its function is as follows. NAD-binding protein involved in the addition of a carboxymethylaminomethyl (cmnm) group at the wobble position (U34) of certain tRNAs, forming tRNA-cmnm(5)s(2)U34. The sequence is that of tRNA uridine 5-carboxymethylaminomethyl modification enzyme MnmG from Protochlamydia amoebophila (strain UWE25).